The sequence spans 102 residues: MAKGQSLQDPFLNALRRERVPVSIYLVNGIKLQGQIESFDQFVILLKNTVSQMVYKHAISTVVPSRPVSHHSNNAGGGTSSNYHHGSSPQNTSAQQDSEETE.

The 60-residue stretch at 9 to 68 (DPFLNALRRERVPVSIYLVNGIKLQGQIESFDQFVILLKNTVSQMVYKHAISTVVPSRPV) folds into the Sm domain. Residues 63–102 (VPSRPVSHHSNNAGGGTSSNYHHGSSPQNTSAQQDSEETE) are disordered. Over residues 70-96 (HHSNNAGGGTSSNYHHGSSPQNTSAQQ) the composition is skewed to polar residues.

This sequence belongs to the Hfq family. In terms of assembly, homohexamer.

In terms of biological role, RNA chaperone that binds small regulatory RNA (sRNAs) and mRNAs to facilitate mRNA translational regulation in response to envelope stress, environmental stress and changes in metabolite concentrations. Also binds with high specificity to tRNAs. This Shigella dysenteriae serotype 1 (strain Sd197) protein is RNA-binding protein Hfq.